Here is a 138-residue protein sequence, read N- to C-terminus: Large ribosomal subunit protein uL16 (138 aa).

This sequence belongs to the universal ribosomal protein uL16 family. As to quaternary structure, part of the 50S ribosomal subunit.

Binds 23S rRNA and is also seen to make contacts with the A and possibly P site tRNAs. The protein is Large ribosomal subunit protein uL16 of Paramagnetospirillum magneticum (strain ATCC 700264 / AMB-1) (Magnetospirillum magneticum).